A 511-amino-acid polypeptide reads, in one-letter code: ADP,ATP carrier protein 4 (511 aa).

Helical transmembrane passes span 34–54 (VSKF…QNLI), 70–90 (IISF…TAIY), 102–122 (IFYL…YVIF), 157–177 (FSLF…LLFW), 192–212 (FYPL…QFLE), 231–251 (FHTL…IIAI), 296–316 (LIAT…GPWK), 330–350 (AAFI…FVVL), 361–381 (FTAA…FFAV), 390–410 (LIIA…IGAI), 453–473 (LGKS…PSAS), and 476–496 (SIST…LWAT).

This sequence belongs to the ADP/ATP translocase tlc family.

The protein localises to the cell membrane. Its function is as follows. Provides the rickettsial cell with host ATP in exchange for rickettsial ADP. This is an obligate exchange system. This energy acquiring activity is an important component of rickettsial parasitism. The protein is ADP,ATP carrier protein 4 (tlcD) of Rickettsia conorii (strain ATCC VR-613 / Malish 7).